Reading from the N-terminus, the 189-residue chain is Capsid protein (189 aa).

An N-acetylmethionine; by host modification is found at Met-1.

This sequence belongs to the tymoviruses capsid protein family.

The protein localises to the virion. Functionally, self-assembles to form a T=3 icosahedral capsid composed of 180 copies of the capsid protein. The capsid encapsulates the single-stranded RNA genome. A pentameric unit may be lost during decapsidation. In Brassica (Chinese cabbage), this protein is Capsid protein.